The sequence spans 160 residues: 2-C-methyl-D-erythritol 2,4-cyclodiphosphate synthase (160 aa).

Residues D11 and H13 each contribute to the a divalent metal cation site. Residues 11–13 and 37–38 contribute to the 4-CDP-2-C-methyl-D-erythritol 2-phosphate site; these read DIH and HS. H45 is a binding site for a divalent metal cation. Residues 59–61, 135–138, and R145 contribute to the 4-CDP-2-C-methyl-D-erythritol 2-phosphate site; these read DIG and TTNE.

Belongs to the IspF family. In terms of assembly, homotrimer. The cofactor is a divalent metal cation.

The catalysed reaction is 4-CDP-2-C-methyl-D-erythritol 2-phosphate = 2-C-methyl-D-erythritol 2,4-cyclic diphosphate + CMP. It functions in the pathway isoprenoid biosynthesis; isopentenyl diphosphate biosynthesis via DXP pathway; isopentenyl diphosphate from 1-deoxy-D-xylulose 5-phosphate: step 4/6. In terms of biological role, involved in the biosynthesis of isopentenyl diphosphate (IPP) and dimethylallyl diphosphate (DMAPP), two major building blocks of isoprenoid compounds. Catalyzes the conversion of 4-diphosphocytidyl-2-C-methyl-D-erythritol 2-phosphate (CDP-ME2P) to 2-C-methyl-D-erythritol 2,4-cyclodiphosphate (ME-CPP) with a corresponding release of cytidine 5-monophosphate (CMP). This Nostoc punctiforme (strain ATCC 29133 / PCC 73102) protein is 2-C-methyl-D-erythritol 2,4-cyclodiphosphate synthase.